An 802-amino-acid polypeptide reads, in one-letter code: Bifunctional purine biosynthetic protein ADE5,7 (802 aa).

Positions 1 to 444 (MPEITAFPQP…FRRDIAYRAL (444 aa)) are GARS. Positions 126-339 (KEFMARHNIP…LAEVLLACVE (214 aa)) constitute an ATP-grasp domain. 157-218 (KPFTSGRSVI…EEYLSGPEIS (62 aa)) contributes to the ATP binding site. Glutamate 307 and asparagine 309 together coordinate Mg(2+). The segment at 455–788 (LTYAAAGVSV…EAWVIGEVQE (334 aa)) is AIRS.

In the N-terminal section; belongs to the GARS family. This sequence in the C-terminal section; belongs to the AIR synthase family. In terms of assembly, homodimer. The cofactor is Mg(2+). Requires Mn(2+) as cofactor.

It localises to the cytoplasm. The protein localises to the cytosol. It catalyses the reaction 2-formamido-N(1)-(5-O-phospho-beta-D-ribosyl)acetamidine + ATP = 5-amino-1-(5-phospho-beta-D-ribosyl)imidazole + ADP + phosphate + H(+). The catalysed reaction is 5-phospho-beta-D-ribosylamine + glycine + ATP = N(1)-(5-phospho-beta-D-ribosyl)glycinamide + ADP + phosphate + H(+). The protein operates within purine metabolism; IMP biosynthesis via de novo pathway; 5-amino-1-(5-phospho-D-ribosyl)imidazole from N(2)-formyl-N(1)-(5-phospho-D-ribosyl)glycinamide: step 2/2. Its pathway is purine metabolism; IMP biosynthesis via de novo pathway; N(1)-(5-phospho-D-ribosyl)glycinamide from 5-phospho-alpha-D-ribose 1-diphosphate: step 2/2. Functionally, catalyzes the second and fifth step in the 'de novo' purine biosynthesis pathway; contains phosphoribosylamine--glycine ligase (GARS) and phosphoribosylformylglycinamidine cyclo-ligase (AIRS) activities. The chain is Bifunctional purine biosynthetic protein ADE5,7 from Cryptococcus neoformans var. grubii serotype A (strain H99 / ATCC 208821 / CBS 10515 / FGSC 9487) (Filobasidiella neoformans var. grubii).